Here is a 114-residue protein sequence, read N- to C-terminus: Transmembrane protein 256 homolog (114 aa).

The signal sequence occupies residues 1 to 25 (MAAGRVWGRLGAVSGALAVTAGAYG). The Extracellular portion of the chain corresponds to 26 to 64 (AHGFRRSDRDEYLKELFETGNRYHFLHSLALLAVPHCRR). A helical membrane pass occupies residues 65–85 (PLLAGSLLTSGIVLFSGTFYY). Over 86 to 93 (QALSGDPT) the chain is Cytoplasmic. Residues 94 to 114 (LTKAAPYGGTLLILGWAAMAL) form a helical membrane-spanning segment.

It belongs to the TMEM256 family.

Its subcellular location is the cell membrane. The chain is Transmembrane protein 256 homolog from Bufo gargarizans (Asian toad).